A 268-amino-acid chain; its full sequence is Hydroxyethylthiazole kinase (268 aa).

M47 contacts substrate. ATP is bound by residues R122 and T168. A195 lines the substrate pocket.

This sequence belongs to the Thz kinase family. The cofactor is Mg(2+).

It catalyses the reaction 5-(2-hydroxyethyl)-4-methylthiazole + ATP = 4-methyl-5-(2-phosphooxyethyl)-thiazole + ADP + H(+). It participates in cofactor biosynthesis; thiamine diphosphate biosynthesis; 4-methyl-5-(2-phosphoethyl)-thiazole from 5-(2-hydroxyethyl)-4-methylthiazole: step 1/1. In terms of biological role, catalyzes the phosphorylation of the hydroxyl group of 4-methyl-5-beta-hydroxyethylthiazole (THZ). The protein is Hydroxyethylthiazole kinase of Rhizobium rhizogenes (strain K84 / ATCC BAA-868) (Agrobacterium radiobacter).